Reading from the N-terminus, the 280-residue chain is MSALNLTVRVHPVVLFQVVDAFERRNAESHRVIGTLLGSVEKGVVEVTNCFCVPHKEHDDQVEAELSYALDMYDLNRKVNSNEAVVGWWATGNDVTNHSSVIHEYYARECNNPVHLTVDTSLQGGRMGLRSYVCIQLGVPGGKTGCMFTPIPVELTSYEPETFGLKLLQKTVGVAPANRPKTVPPMLDLAQISEASTKLQSLLDLILKYVDDVIAHKVTPDNAVGRQLLDLIHSVPHMSHEQFTQMFNANVRNLLMVITLSQLIKTQLQLNEKLTFLPTA.

The MPN domain maps to 8–138 (VRVHPVVLFQ…LRSYVCIQLG (131 aa)).

Belongs to the eIF-3 subunit F family. Component of the eukaryotic translation initiation factor 3 (eIF-3) complex. The eIF-3 complex interacts with pix.

It is found in the cytoplasm. Its function is as follows. Component of the eukaryotic translation initiation factor 3 (eIF-3) complex, which is involved in protein synthesis of a specialized repertoire of mRNAs and, together with other initiation factors, stimulates binding of mRNA and methionyl-tRNAi to the 40S ribosome. The eIF-3 complex specifically targets and initiates translation of a subset of mRNAs involved in cell proliferation. The protein is Eukaryotic translation initiation factor 3 subunit F-1 of Drosophila persimilis (Fruit fly).